Consider the following 227-residue polypeptide: 6-phosphogluconolactonase (227 aa).

The protein belongs to the glucosamine/galactosamine-6-phosphate isomerase family. 6-phosphogluconolactonase subfamily.

It carries out the reaction 6-phospho-D-glucono-1,5-lactone + H2O = 6-phospho-D-gluconate + H(+). Its pathway is carbohydrate degradation; pentose phosphate pathway; D-ribulose 5-phosphate from D-glucose 6-phosphate (oxidative stage): step 2/3. Functionally, hydrolysis of 6-phosphogluconolactone to 6-phosphogluconate. The chain is 6-phosphogluconolactonase (pgl) from Helicobacter pylori (strain ATCC 700392 / 26695) (Campylobacter pylori).